The chain runs to 122 residues: Basic phospholipase A2 (122 aa).

Disulfide bonds link C26-C115, C28-C44, C43-C95, C49-C122, C50-C88, C57-C81, and C75-C86. The Ca(2+) site is built by Y27, G29, and G31. H47 is a catalytic residue. Residue D48 coordinates Ca(2+). D89 is a catalytic residue.

The protein belongs to the phospholipase A2 family. Group II subfamily. D49 sub-subfamily. Homodimer. The cofactor is Ca(2+). In terms of tissue distribution, expressed by the venom gland.

The protein resides in the secreted. It catalyses the reaction a 1,2-diacyl-sn-glycero-3-phosphocholine + H2O = a 1-acyl-sn-glycero-3-phosphocholine + a fatty acid + H(+). Its function is as follows. Snake venom phospholipase A2 (PLA2) that inhibits neuromuscular transmission by blocking acetylcholine release from the nerve termini. PLA2 catalyzes the calcium-dependent hydrolysis of the 2-acyl groups in 3-sn-phosphoglycerides. The chain is Basic phospholipase A2 from Gloydius blomhoffii (Mamushi).